Consider the following 137-residue polypeptide: Putative pre-16S rRNA nuclease (137 aa).

Belongs to the YqgF nuclease family.

It localises to the cytoplasm. Could be a nuclease involved in processing of the 5'-end of pre-16S rRNA. In Flavobacterium psychrophilum (strain ATCC 49511 / DSM 21280 / CIP 103535 / JIP02/86), this protein is Putative pre-16S rRNA nuclease.